The sequence spans 93 residues: Small ribosomal subunit protein uS19 (93 aa).

It belongs to the universal ribosomal protein uS19 family.

In terms of biological role, protein S19 forms a complex with S13 that binds strongly to the 16S ribosomal RNA. The protein is Small ribosomal subunit protein uS19 of Clavibacter michiganensis subsp. michiganensis (strain NCPPB 382).